Reading from the N-terminus, the 796-residue chain is MFAVNLKICIFLSLVSFLLQCKNTLANVTFEQKVQTNLSHDKNGDIVYGHREFKGGIYAFLGYDNCTIEVNKTVNGIDWNEKKDVKVSGNNNIAVVYSIFTSEEKMILIFKCDNKFYITKYGKEFKWSDPKVIDVSNVIGTNTTPAVYSGSLLSMNNDFEKYILVCENHSQNYINVVDQEYMREIRLLGKCMLSFDEGNNWKNEVMNLYSDEGYTKINTLRLSDYGGKILVKGTNAQNLNQTIRSIILLCSNLHDWKLFCGLPTIRFRKDISVENLTYLNTYHLAIVKNEDKLQLAFTYDLFETFDPQYLNTEFNGVSHYFVLAPDEMVYLFYHGNEKKNYVIKIKTVPRKIGCELNTNDTVNKIYTYTYKYIYNNKLSAKTCKVPSSHLKYSSDGLYKLFEVRLPKDIKVTENCFRYSFLSDLNNKYHTTIIKTRVINKLEDYVEVQFHFPIYYTKFLYNYKSTYCVLSNNYRIVVEFDYIRNHIDLDFPFDTDTVKLYSNESVTHAFRNNTEKTHVHKFPKGTYMTSYFSYEKEYVISNYIEEPFSTTFTILTQTQMNVHFMAGGQKYKYEGIDLTDSSPNYELSLNSLSDSQNVDIFVSKFDNNKTIGFVCPVKSSYDGLNCFDNVYIKNKTLVKIEYLFGENDIFVVPQRRIYKTEGTAMESLLYLNNNNVKKLIDDKSIIHFYCECNVNNNVIKVNYYISPFYDENSIKQEINKKDQEITMINKTIPQDEKDILFNNEKVVPLSNEPQEIIQPPIQEKLNTTDPSKAYIYGANIIFIAIISIISLSISSFI.

An N-terminal signal peptide occupies residues 1–26; the sequence is MFAVNLKICIFLSLVSFLLQCKNTLA. N-linked (GlcNAc...) asparagine glycans are attached at residues Asn-27, Asn-37, Asn-65, Asn-71, Asn-168, Asn-240, Asn-275, Asn-359, Asn-502, Asn-511, Asn-607, Asn-633, Asn-728, and Asn-765. The region spanning 571–720 is the 6-Cys domain; the sequence is KYEGIDLTDS…NSIKQEINKK (150 aa). 2 cysteine pairs are disulfide-bonded: Cys-614/Cys-691 and Cys-625/Cys-689.

In terms of assembly, interacts with host complement factor CFH isoform 1 (via sushi 4-6 domains) and CFH isoform FHL-1 (via sushi 4-6 domains); this interaction recruits CFH onto the merozoite surface preventing complement-mediated cell lysis. The interaction does not affect CFH activity.

Its subcellular location is the cell surface. The protein localises to the cell membrane. Its function is as follows. During the asexual blood stage, recruits host complement factor H CFH to the surface of merozoites resulting in the down-regulation of the host complement alternative pathway and thus, protecting merozoites from complement-mediated lysis. The chain is Merozoite surface protein P92 from Plasmodium falciparum (isolate 3D7).